The primary structure comprises 629 residues: Phosphomethylpyrimidine synthase (629 aa).

Residues Asn215, Met244, Tyr273, His309, 329–331 (SRG), 370–373 (DGLR), and Glu409 each bind substrate. His413 contacts Zn(2+). Tyr436 is a substrate binding site. His477 contacts Zn(2+). Positions 557, 560, and 565 each coordinate [4Fe-4S] cluster. The disordered stretch occupies residues 589-610 (ENIKRETSAEEAEEAREGMSDM).

It belongs to the ThiC family. Homodimer. [4Fe-4S] cluster serves as cofactor.

The catalysed reaction is 5-amino-1-(5-phospho-beta-D-ribosyl)imidazole + S-adenosyl-L-methionine = 4-amino-2-methyl-5-(phosphooxymethyl)pyrimidine + CO + 5'-deoxyadenosine + formate + L-methionine + 3 H(+). It functions in the pathway cofactor biosynthesis; thiamine diphosphate biosynthesis. Functionally, catalyzes the synthesis of the hydroxymethylpyrimidine phosphate (HMP-P) moiety of thiamine from aminoimidazole ribotide (AIR) in a radical S-adenosyl-L-methionine (SAM)-dependent reaction. The sequence is that of Phosphomethylpyrimidine synthase from Erythrobacter litoralis (strain HTCC2594).